The chain runs to 372 residues: Protein phosphatase Mn(2+)-dependent 1K (372 aa).

The N-terminal 29 residues, 1-29 (MLSAAFITLLRSGGNQVKKRVLLSSILLQ), are a transit peptide targeting the mitochondrion. Residues 46 to 61 (RCSRFDPDGSGQPATW) form a critical for association with the BCKDH complex region. A PPM-type phosphatase domain is found at 94-346 (NVGCASLIGK…DNSTAVVVPF (253 aa)). Residues Asp127 and Gly128 each contribute to the Mn(2+) site. Residue Ser248 is modified to Phosphoserine. Residues Asp298 and Asp337 each contribute to the Mn(2+) site.

Belongs to the PP2C family. Monomer. Interacts with E1 and E2 components of the branched-chain alpha-ketoacid dehydrogenase (BCKDH) complex; this interaction requires colocalization in mitochondria. Interacts with BCKDHA but not with BCKDHB of the E1 component. Interacts with the 24-meric E2 core composed of DBT monomers with a 24:1 stoichiometry; the N-terminal region (residues 49-61) of PPM1K and C-terminal linker of the lipoyl domain of DBT (residues 145-160) are critical for this interaction, whereas the lipoyl prosthetic group is dispensable. Competes with BCKDK for binding to the E2 core; this interaction is modulated by branched-chain alpha-keto acids. At steady state, BCKDH holoenzyme preferentially binds BCKDK and BCKDHA is phosphorylated. In response to high levels of branched-chain alpha-keto acids, the inhibitory BCKDK is replaced by activating PPM1K leading to BCKDHA dephosphorylation and BCAA degradation. It depends on Mn(2+) as a cofactor. In terms of tissue distribution, highly expressed in the heart, kidney, brain and liver and to a lesser extent in testis, lung, spleen and adipose tissue. Very low amount in muscle (at protein level). Also expressed in the thymus (at protein level) and the diaphragm. Significantly reduced in hypertrophied hearts.

It is found in the mitochondrion matrix. It carries out the reaction O-phospho-L-seryl-[3-methyl-2-oxobutanoate dehydrogenase] + H2O = L-seryl-[3-methyl-2-oxobutanoate dehydrogenase] + phosphate. The catalysed reaction is O-phospho-L-seryl-[protein] + H2O = L-seryl-[protein] + phosphate. Its pathway is protein modification. In terms of biological role, serine/threonine-protein phosphatase component of macronutrients metabolism. Forms a functional kinase and phosphatase pair with BCKDK, serving as a metabolic regulatory node that coordinates branched-chain amino acids (BCAAs) with glucose and lipid metabolism via two distinct phosphoprotein targets: mitochondrial BCKDHA subunit of the branched-chain alpha-ketoacid dehydrogenase (BCKDH) complex and cytosolic ACLY, a lipogenic enzyme of Krebs cycle. At high levels of branched-chain ketoacids, dephosphorylates and activates mitochondrial BCKDH complex, a multisubunit complex consisting of three multimeric components each involved in different steps of BCAA catabolism: E1 composed of BCKDHA and BCKDHB, E2 core composed of DBT monomers, and E3 composed of DLD monomers. Tightly associates with the E2 component of BCKDH complex and dephosphorylates BCKDHA on Ser-334. Regulates the reversible phosphorylation of ACLY in response to changes in cellular carbohydrate abundance such as occurs during fasting to feeding metabolic transition. At fasting state, appears to dephosphorylate ACLY on Ser-455 and inactivate it. Refeeding stimulates MLXIPL/ChREBP transcription factor, leading to increased BCKDK to PPM1K expression ratio, phosphorylation and activation of ACLY that ultimately results in the generation of malonyl-CoA and oxaloacetate immediate substrates of de novo lipogenesis and gluconeogenesis, respectively. Recognizes phosphosites having SxS or RxxS motifs and strictly depends on Mn(2+) ions for the phosphatase activity. Regulates Ca(2+)-induced opening of mitochondrial transition pore and apoptotic cell death. This is Protein phosphatase Mn(2+)-dependent 1K from Mus musculus (Mouse).